The sequence spans 227 residues: Cytochrome c oxidase subunit 2 (227 aa).

The Mitochondrial intermembrane portion of the chain corresponds to 1–14; that stretch reads MAYPFQLGLQDATS. Residues 15-45 form a helical membrane-spanning segment; the sequence is PIMEELTNFHDHTLMIVFLISSLVLYIISSM. Residues 46–59 lie on the Mitochondrial matrix side of the membrane; sequence LATKMTHTSTMDAQ. The chain crosses the membrane as a helical span at residues 60 to 87; that stretch reads SMETIWTILPAVILVLIALPSLRILYMM. Residues 88-227 lie on the Mitochondrial intermembrane side of the membrane; sequence DEINNPVLTV…FFENWSASMI (140 aa). Cu cation is bound by residues histidine 161, cysteine 196, glutamate 198, cysteine 200, histidine 204, and methionine 207. Residue glutamate 198 coordinates Mg(2+).

This sequence belongs to the cytochrome c oxidase subunit 2 family. Component of the cytochrome c oxidase (complex IV, CIV), a multisubunit enzyme composed of 14 subunits. The complex is composed of a catalytic core of 3 subunits MT-CO1, MT-CO2 and MT-CO3, encoded in the mitochondrial DNA, and 11 supernumerary subunits COX4I, COX5A, COX5B, COX6A, COX6B, COX6C, COX7A, COX7B, COX7C, COX8 and NDUFA4, which are encoded in the nuclear genome. The complex exists as a monomer or a dimer and forms supercomplexes (SCs) in the inner mitochondrial membrane with NADH-ubiquinone oxidoreductase (complex I, CI) and ubiquinol-cytochrome c oxidoreductase (cytochrome b-c1 complex, complex III, CIII), resulting in different assemblies (supercomplex SCI(1)III(2)IV(1) and megacomplex MCI(2)III(2)IV(2)). Found in a complex with TMEM177, COA6, COX18, COX20, SCO1 and SCO2. Interacts with TMEM177 in a COX20-dependent manner. Interacts with COX20. Interacts with COX16. Cu cation is required as a cofactor.

It is found in the mitochondrion inner membrane. It catalyses the reaction 4 Fe(II)-[cytochrome c] + O2 + 8 H(+)(in) = 4 Fe(III)-[cytochrome c] + 2 H2O + 4 H(+)(out). Functionally, component of the cytochrome c oxidase, the last enzyme in the mitochondrial electron transport chain which drives oxidative phosphorylation. The respiratory chain contains 3 multisubunit complexes succinate dehydrogenase (complex II, CII), ubiquinol-cytochrome c oxidoreductase (cytochrome b-c1 complex, complex III, CIII) and cytochrome c oxidase (complex IV, CIV), that cooperate to transfer electrons derived from NADH and succinate to molecular oxygen, creating an electrochemical gradient over the inner membrane that drives transmembrane transport and the ATP synthase. Cytochrome c oxidase is the component of the respiratory chain that catalyzes the reduction of oxygen to water. Electrons originating from reduced cytochrome c in the intermembrane space (IMS) are transferred via the dinuclear copper A center (CU(A)) of subunit 2 and heme A of subunit 1 to the active site in subunit 1, a binuclear center (BNC) formed by heme A3 and copper B (CU(B)). The BNC reduces molecular oxygen to 2 water molecules using 4 electrons from cytochrome c in the IMS and 4 protons from the mitochondrial matrix. This Acomys wilsoni (Wilson's spiny mouse) protein is Cytochrome c oxidase subunit 2 (MT-CO2).